Consider the following 60-residue polypeptide: Large ribosomal subunit protein uL30 (60 aa).

It belongs to the universal ribosomal protein uL30 family. Part of the 50S ribosomal subunit.

The polypeptide is Large ribosomal subunit protein uL30 (Christiangramia forsetii (strain DSM 17595 / CGMCC 1.15422 / KT0803) (Gramella forsetii)).